The chain runs to 465 residues: 3-isopropylmalate dehydratase large subunit (465 aa).

[4Fe-4S] cluster is bound by residues cysteine 347, cysteine 407, and cysteine 410.

It belongs to the aconitase/IPM isomerase family. LeuC type 1 subfamily. Heterodimer of LeuC and LeuD. The cofactor is [4Fe-4S] cluster.

It carries out the reaction (2R,3S)-3-isopropylmalate = (2S)-2-isopropylmalate. Its pathway is amino-acid biosynthesis; L-leucine biosynthesis; L-leucine from 3-methyl-2-oxobutanoate: step 2/4. Functionally, catalyzes the isomerization between 2-isopropylmalate and 3-isopropylmalate, via the formation of 2-isopropylmaleate. This Aeromonas salmonicida (strain A449) protein is 3-isopropylmalate dehydratase large subunit.